Reading from the N-terminus, the 301-residue chain is Peroxisome assembly protein 26 (301 aa).

At 1-246 (MKNDSSTSAA…DAAASHLLSQ (246 aa)) the chain is on the cytoplasmic side. The chain crosses the membrane as a helical; Signal-anchor for type II membrane protein span at residues 247–263 (PFKKSLLAALILCLLVL). Residues 264–301 (RFDPATPSSLPFLYQLAHLFRRIQKATLSRLYPLALRD) are Peroxisomal-facing.

It belongs to the peroxin-26 family. As to quaternary structure, interacts directly with PEX6 via its cytoplasmic domain. Interacts indirectly with PEX1, via its interaction with PEX6.

It localises to the peroxisome membrane. Peroxisomal docking factor that anchors PEX1 and PEX6 to peroxisome membranes. It is therefore required for the formation of the PEX1-PEX6 AAA ATPase complex, a complex that mediates the extraction of the PEX5 receptor from peroxisomal membrane. This chain is Peroxisome assembly protein 26 (Pex26), found in Cricetulus griseus (Chinese hamster).